The sequence spans 443 residues: Pentatricopeptide repeat-containing protein 6, mitochondrial (443 aa).

The N-terminal 13 residues, 1–13 (MRILGSLPNNIRK), are a transit peptide targeting the mitochondrion. 2 PPR repeats span residues 130 to 164 (NIVD…RIRP) and 220 to 254 (NSTT…NENS).

It localises to the mitochondrion. Functionally, mitochondrial RNA-binding protein required for the stability of the atp9 mRNA. The protein is Pentatricopeptide repeat-containing protein 6, mitochondrial (ppr6) of Schizosaccharomyces pombe (strain 972 / ATCC 24843) (Fission yeast).